We begin with the raw amino-acid sequence, 89 residues long: Small ribosomal subunit protein uS15 (89 aa).

The protein belongs to the universal ribosomal protein uS15 family. In terms of assembly, part of the 30S ribosomal subunit. Forms a bridge to the 50S subunit in the 70S ribosome, contacting the 23S rRNA.

One of the primary rRNA binding proteins, it binds directly to 16S rRNA where it helps nucleate assembly of the platform of the 30S subunit by binding and bridging several RNA helices of the 16S rRNA. Its function is as follows. Forms an intersubunit bridge (bridge B4) with the 23S rRNA of the 50S subunit in the ribosome. This chain is Small ribosomal subunit protein uS15, found in Bacillus licheniformis (strain ATCC 14580 / DSM 13 / JCM 2505 / CCUG 7422 / NBRC 12200 / NCIMB 9375 / NCTC 10341 / NRRL NRS-1264 / Gibson 46).